A 399-amino-acid chain; its full sequence is CCA-adding enzyme (399 aa).

ATP-binding residues include Gly-32 and Arg-35. Positions 32 and 35 each coordinate CTP. 2 residues coordinate Mg(2+): Asp-45 and Asp-47. ATP-binding residues include Arg-116, Asp-159, Arg-162, Arg-165, and Arg-168. Arg-116, Asp-159, Arg-162, Arg-165, and Arg-168 together coordinate CTP.

The protein belongs to the tRNA nucleotidyltransferase/poly(A) polymerase family. Bacterial CCA-adding enzyme type 3 subfamily. Homodimer. Mg(2+) serves as cofactor.

The catalysed reaction is a tRNA precursor + 2 CTP + ATP = a tRNA with a 3' CCA end + 3 diphosphate. The enzyme catalyses a tRNA with a 3' CCA end + 2 CTP + ATP = a tRNA with a 3' CCACCA end + 3 diphosphate. Catalyzes the addition and repair of the essential 3'-terminal CCA sequence in tRNAs without using a nucleic acid template. Adds these three nucleotides in the order of C, C, and A to the tRNA nucleotide-73, using CTP and ATP as substrates and producing inorganic pyrophosphate. tRNA 3'-terminal CCA addition is required both for tRNA processing and repair. Also involved in tRNA surveillance by mediating tandem CCA addition to generate a CCACCA at the 3' terminus of unstable tRNAs. While stable tRNAs receive only 3'-terminal CCA, unstable tRNAs are marked with CCACCA and rapidly degraded. The chain is CCA-adding enzyme from Streptococcus pneumoniae serotype 19F (strain G54).